The primary structure comprises 161 residues: Phosphopantetheine adenylyltransferase (161 aa).

S8 contributes to the substrate binding site. Residues S8–F9 and H16 each bind ATP. Residues K40, T72, and R86 each coordinate substrate. ATP is bound by residues G87–R89, E97, and H122–S128.

It belongs to the bacterial CoaD family. In terms of assembly, homohexamer. Mg(2+) serves as cofactor.

It is found in the cytoplasm. The catalysed reaction is (R)-4'-phosphopantetheine + ATP + H(+) = 3'-dephospho-CoA + diphosphate. It functions in the pathway cofactor biosynthesis; coenzyme A biosynthesis; CoA from (R)-pantothenate: step 4/5. In terms of biological role, reversibly transfers an adenylyl group from ATP to 4'-phosphopantetheine, yielding dephospho-CoA (dPCoA) and pyrophosphate. In Prochlorococcus marinus (strain SARG / CCMP1375 / SS120), this protein is Phosphopantetheine adenylyltransferase.